Reading from the N-terminus, the 579-residue chain is Putative laccase-9 (579 aa).

The first 27 residues, 1-27 (MGTAKLPALLWLLAGVVLALAVNPAHG), serve as a signal peptide directing secretion. 2 consecutive Plastocyanin-like domains span residues 36 to 152 (FITE…PKRG) and 162 to 319 (KEIP…YTDS). Residues asparagine 41 and asparagine 82 are each glycosylated (N-linked (GlcNAc...) asparagine). Cu cation is bound by residues histidine 86 and histidine 88. N-linked (GlcNAc...) asparagine glycosylation occurs at asparagine 114. 2 residues coordinate Cu cation: histidine 131 and histidine 133. Residues asparagine 307, asparagine 405, and asparagine 446 are each glycosylated (N-linked (GlcNAc...) asparagine). Residues 436-563 (PTAFVDPPVN…DTVFIVKDGK (128 aa)) enclose the Plastocyanin-like 3 domain. Residues histidine 480, histidine 483, and histidine 485 each coordinate Cu cation. A glycan (N-linked (GlcNAc...) asparagine) is linked at asparagine 496. Residues histidine 542, cysteine 543, histidine 544, histidine 548, and methionine 553 each coordinate Cu cation.

This sequence belongs to the multicopper oxidase family. Cu cation serves as cofactor.

It is found in the secreted. It localises to the extracellular space. The protein resides in the apoplast. It catalyses the reaction 4 hydroquinone + O2 = 4 benzosemiquinone + 2 H2O. Lignin degradation and detoxification of lignin-derived products. The protein is Putative laccase-9 (LAC9) of Oryza sativa subsp. japonica (Rice).